The sequence spans 117 residues: Serine rich endogenous peptide 5 (117 aa).

The signal sequence occupies residues 1–31 (MATKTSNFVSLRVSLFILLLFISSQVAIADA). An SCOOP motif motif is present at residues 41-55 (LQIVRRSRSQRGRQY). A compositionally biased stretch (basic residues) spans 42–51 (QIVRRSRSQR). A disordered region spans residues 42–117 (QIVRRSRSQR…LPYASSPTST (76 aa)). A SxS motif essential for MIK2 binding motif is present at residues 47 to 49 (SRS). Residues 60–84 (LRVPPPPPPPLPQMPSAATPPPMPQ) show a composition bias toward pro residues.

As to quaternary structure, interacts with MIK2 (via extracellular leucine-rich repeat domain); this interaction triggers the formation of complex between MIK2 and the BAK1/SERK3 and SERK4 coreceptors, and subsequent BAK1 activation by phosphorylation.

It localises to the cell membrane. The protein resides in the secreted. It is found in the extracellular space. The protein localises to the apoplast. Brassicaceae-specific phytocytokine (plant endogenous peptide released into the apoplast) perceived by MIK2 in a BAK1/SERK3 and SERK4 coreceptors-dependent manner, that modulates various physiological and antimicrobial processes including growth prevention and reactive oxygen species (ROS) response regulation. This is Serine rich endogenous peptide 5 from Arabidopsis thaliana (Mouse-ear cress).